The following is a 633-amino-acid chain: Protein arginine N-methyltransferase 5 (633 aa).

An SAM-dependent MTase PRMT-type domain is found at 304–611 (LQSPLQPLMD…NNGKKVWYEW (308 aa)). Y320 is an S-adenosyl-L-methionine binding site. Residue F323 coordinates a protein. Residues 329–330 (KY), E388, and 414–416 (GDM) contribute to the S-adenosyl-L-methionine site. A protein-binding residues include E431 and E440. Active-site proton donor/acceptor residues include E431 and E440. E440 serves as a coordination point for S-adenosyl-L-methionine.

The protein belongs to the class I-like SAM-binding methyltransferase superfamily. Protein arginine N-methyltransferase family. In terms of assembly, heterotetramer; dimer of heterodimer with wdr77. Interacts with wee2-a; this interaction is disrupted upon activation of the DNA replication checkpoint. Detected in egg (at protein level).

It is found in the cytoplasm. The protein localises to the nucleus. The protein resides in the cytosol. It catalyses the reaction L-arginyl-[protein] + 2 S-adenosyl-L-methionine = N(omega),N(omega)'-dimethyl-L-arginyl-[protein] + 2 S-adenosyl-L-homocysteine + 2 H(+). Functionally, arginine methyltransferase that can both catalyze the formation of omega-N monomethylarginine (MMA) and symmetrical dimethylarginine (sDMA), with a preference for the formation of MMA. Specifically mediates the symmetrical dimethylation of arginine residues in the small nuclear ribonucleoproteins; such methylation being required for the assembly and biogenesis of snRNP core particles. Methylates the arginine in the motif G-R-G-X-G in its substrates histone H2A, H2AX and H4, producing both monomethylated and symmetrically dimethylated 'Arg-3'. Methylates nucleoplasmin at 'Arg-192', producing both monomethylated and symmetrically dimethylated 'Arg-192'. Involved in the DNA replication checkpoint. Promotes entry into mitosis by promoting the proteasomal degradation of wee2-a. May act as a transcriptional corepressor in CRY1-mediated repression of the core circadian component PER1. Involved in spliceosome maturation and mRNA splicing. This is Protein arginine N-methyltransferase 5 (prmt5) from Xenopus laevis (African clawed frog).